The primary structure comprises 431 residues: Adenylosuccinate synthetase (431 aa).

Residues 15-21 and 43-45 each bind GTP; these read GDEGKGK and GHT. The active-site Proton acceptor is the D16. D16 and G43 together coordinate Mg(2+). Residues 16–19, 41–44, T135, R149, N227, T242, and R306 each bind IMP; these read DEGK and NAGH. The active-site Proton donor is the H44. Residue 302–308 participates in substrate binding; sequence VTTGRKR. Residues R308, 334 to 336, and 416 to 418 contribute to the GTP site; these read KLD and GVG.

The protein belongs to the adenylosuccinate synthetase family. In terms of assembly, homodimer. Mg(2+) is required as a cofactor.

The protein resides in the cytoplasm. It catalyses the reaction IMP + L-aspartate + GTP = N(6)-(1,2-dicarboxyethyl)-AMP + GDP + phosphate + 2 H(+). Its pathway is purine metabolism; AMP biosynthesis via de novo pathway; AMP from IMP: step 1/2. Its function is as follows. Plays an important role in the de novo pathway and in the salvage pathway of purine nucleotide biosynthesis. Catalyzes the first committed step in the biosynthesis of AMP from IMP. In Monosiga brevicollis (Choanoflagellate), this protein is Adenylosuccinate synthetase.